The primary structure comprises 286 residues: Acetyl-coenzyme A carboxylase carboxyl transferase subunit beta (286 aa).

One can recognise a CoA carboxyltransferase N-terminal domain in the interval 23–286; that stretch reads IWVKCNNCNQ…ITNKPEPKKE (264 aa). Zn(2+) is bound by residues cysteine 27, cysteine 30, cysteine 46, and cysteine 49. The C4-type zinc-finger motif lies at 27 to 49; the sequence is CNNCNQMIYKIELEKNLEVCPKC.

The protein belongs to the AccD/PCCB family. As to quaternary structure, acetyl-CoA carboxylase is a heterohexamer composed of biotin carboxyl carrier protein (AccB), biotin carboxylase (AccC) and two subunits each of ACCase subunit alpha (AccA) and ACCase subunit beta (AccD). It depends on Zn(2+) as a cofactor.

It localises to the cytoplasm. The enzyme catalyses N(6)-carboxybiotinyl-L-lysyl-[protein] + acetyl-CoA = N(6)-biotinyl-L-lysyl-[protein] + malonyl-CoA. It functions in the pathway lipid metabolism; malonyl-CoA biosynthesis; malonyl-CoA from acetyl-CoA: step 1/1. Component of the acetyl coenzyme A carboxylase (ACC) complex. Biotin carboxylase (BC) catalyzes the carboxylation of biotin on its carrier protein (BCCP) and then the CO(2) group is transferred by the transcarboxylase to acetyl-CoA to form malonyl-CoA. The polypeptide is Acetyl-coenzyme A carboxylase carboxyl transferase subunit beta (Wigglesworthia glossinidia brevipalpis).